We begin with the raw amino-acid sequence, 425 residues long: Glutamyl-tRNA reductase (425 aa).

Residues 49 to 52 (TCNR), Ser-107, 112 to 114 (EPQ), and Gln-118 each bind substrate. Cys-50 acts as the Nucleophile in catalysis. 187 to 192 (GAGETI) is an NADP(+) binding site.

It belongs to the glutamyl-tRNA reductase family. Homodimer.

It carries out the reaction (S)-4-amino-5-oxopentanoate + tRNA(Glu) + NADP(+) = L-glutamyl-tRNA(Glu) + NADPH + H(+). It participates in porphyrin-containing compound metabolism; protoporphyrin-IX biosynthesis; 5-aminolevulinate from L-glutamyl-tRNA(Glu): step 1/2. Functionally, catalyzes the NADPH-dependent reduction of glutamyl-tRNA(Glu) to glutamate 1-semialdehyde (GSA). In Pseudomonas syringae pv. tomato (strain ATCC BAA-871 / DC3000), this protein is Glutamyl-tRNA reductase.